We begin with the raw amino-acid sequence, 369 residues long: Peptidyl-prolyl cis-trans isomerase D (369 aa).

The PPIase cyclophilin-type domain occupies 7-175 (YFDISCNGKP…EDWKIADCGE (169 aa)). TPR repeat units follow at residues 217–250 (VSKIKDIGTKLLKEGKLEKSYEKYTKANSYLNDY), 268–301 (LSCYLNAALVALKLKHGKDAIAAANNALEVEQID), and 306–339 (TKALYRKGMGYILVKDEEQAQKILEEALELEPND).

This sequence belongs to the cyclophilin-type PPIase family. PPIase D subfamily.

Its subcellular location is the cytoplasm. It carries out the reaction [protein]-peptidylproline (omega=180) = [protein]-peptidylproline (omega=0). In terms of biological role, PPIases accelerate the folding of proteins. It catalyzes the cis-trans isomerization of proline imidic peptide bonds in oligopeptides. This Candida albicans (strain SC5314 / ATCC MYA-2876) (Yeast) protein is Peptidyl-prolyl cis-trans isomerase D (CPR6).